Consider the following 99-residue polypeptide: Integration host factor subunit alpha (99 aa).

A disordered region spans residues 49–71 (FGNFDLRDKNQRPGRNPKTGEDI).

The protein belongs to the bacterial histone-like protein family. In terms of assembly, heterodimer of an alpha and a beta chain.

This protein is one of the two subunits of integration host factor, a specific DNA-binding protein that functions in genetic recombination as well as in transcriptional and translational control. This Shewanella denitrificans (strain OS217 / ATCC BAA-1090 / DSM 15013) protein is Integration host factor subunit alpha.